The primary structure comprises 1589 residues: Paternally-expressed gene 3 protein (1589 aa).

One can recognise an SCAN box domain in the interval 46–128 (HQRFRNLIYV…TLLENYKEMY (83 aa)). Disordered regions lie at residues 128-230 (YQPE…ESYQ), 266-306 (DGHS…RRGI), and 319-349 (KFIK…MSDD). Positions 129–142 (QPEDDNNSDVTSDD) are enriched in acidic residues. 4 stretches are compositionally biased toward basic and acidic residues: residues 143 to 152 (DMTRNRRESS), 161 to 182 (SGDR…DRWS), 206 to 225 (FEMD…RSQD), and 295 to 306 (PEAKKSTHRRGI). 3 consecutive C2H2-type zinc fingers follow at residues 454–476 (YVCD…QIMH), 507–529 (FECK…RKIH), and 565–587 (YECR…QKIH). The segment covering 588–607 (FGDDKDNEREHERERERGET) has biased composition (basic and acidic residues). Residues 588–610 (FGDDKDNEREHERERERGETFRP) form a disordered region. The C2H2-type 4 zinc-finger motif lies at 627 to 649 (YECKVCGETFLHSSSLKEHQKIH). A disordered region spans residues 838-930 (LVASKPPRSH…EFSVPSSNVR (93 aa)). The span at 868–881 (LNDKRQKIPARENP) shows a compositional bias: basic and acidic residues. A C2H2-type 5 zinc finger spans residues 969–991 (YECQECGECFAHSSDLTEHQKIH). A disordered region spans residues 1056-1104 (EKSHGEESQGENTDGEETHSEETHGQETIEDPVIQSSDMEDPQKDDPDD). The span at 1071–1082 (EETHSEETHGQE) shows a compositional bias: basic and acidic residues. C2H2-type zinc fingers lie at residues 1107 to 1129 (YECE…QKVH), 1163 to 1185 (YECP…QRIH), 1225 to 1247 (IRCL…MRLH), 1282 to 1304 (FECA…VTVH), and 1332 to 1354 (YECK…KELH). The segment covering 1396-1416 (AEPEVEAAEPEVEAAEPEVEA) has biased composition (acidic residues). Residues 1396 to 1496 (AEPEVEAAEP…GIEDPEEGED (101 aa)) form a disordered region. 7 consecutive repeat copies span residues 1398 to 1404 (PEVEAAE), 1405 to 1411 (PEVEAAE), 1412 to 1418 (PEVEAAE), 1419 to 1423 (PNGEA), 1426 to 1430 (PDGEA), 1433 to 1437 (PIGEA), and 1440 to 1444 (PNGEA). The segment at 1398-1418 (PEVEAAEPEVEAAEPEVEAAE) is 3 X 7 AA repeat of P-E-V-E-A-A-E. The interval 1419-1444 (PNGEAEGPDGEAAEPIGEAGQPNGEA) is 4 X 5 AA repeat of P-X-G-E-A. 2 stretches are compositionally biased toward acidic residues: residues 1450 to 1467 (DADE…ERAE) and 1476 to 1496 (PEGD…EGED). 2 consecutive C2H2-type zinc fingers follow at residues 1506–1528 (YDCH…LKTH) and 1565–1587 (FKCD…QNTH).

It belongs to the krueppel C2H2-type zinc-finger protein family. As to quaternary structure, homodimer. Interacts with SIAH1A and SIAH2. Interacts with TRAF2.

Its subcellular location is the nucleus. It is found in the cytoplasm. Its function is as follows. Induces apoptosis in cooperation with SIAH1A. Acts as a mediator between p53/TP53 and BAX in a neuronal death pathway that is activated by DNA damage. Acts synergistically with TRAF2 and inhibits TNF induced apoptosis through activation of NF-kappa-B. The chain is Paternally-expressed gene 3 protein (PEG3) from Gorilla gorilla gorilla (Western lowland gorilla).